A 138-amino-acid polypeptide reads, in one-letter code: uncharacterized protein (138 aa).

3 helical membrane-spanning segments follow: residues leucine 12–isoleucine 32, leucine 62–leucine 82, and phenylalanine 111–serine 131.

Its subcellular location is the cell membrane. This is an uncharacterized protein from Haemophilus influenzae (strain ATCC 51907 / DSM 11121 / KW20 / Rd).